The chain runs to 182 residues: MKETRVAYRYAKSLIDLAAENGVLDRVNADMAGIESVFKQNHQLVAVMKNPIVQGDKKHAILEALFGGKVDNFTMSLLSLLTKKHREAVVFEISSEFQRQYREKMGIKIVEVTTTQPITEDQRANFKAIMASKASKVELIEKIDEKILGGFVLKMDDQQIDESVIAKLNKIKNKFTEQVINY.

It belongs to the ATPase delta chain family. As to quaternary structure, F-type ATPases have 2 components, F(1) - the catalytic core - and F(0) - the membrane proton channel. F(1) has five subunits: alpha(3), beta(3), gamma(1), delta(1), epsilon(1). F(0) has three main subunits: a(1), b(2) and c(10-14). The alpha and beta chains form an alternating ring which encloses part of the gamma chain. F(1) is attached to F(0) by a central stalk formed by the gamma and epsilon chains, while a peripheral stalk is formed by the delta and b chains.

It is found in the cell inner membrane. Functionally, f(1)F(0) ATP synthase produces ATP from ADP in the presence of a proton or sodium gradient. F-type ATPases consist of two structural domains, F(1) containing the extramembraneous catalytic core and F(0) containing the membrane proton channel, linked together by a central stalk and a peripheral stalk. During catalysis, ATP synthesis in the catalytic domain of F(1) is coupled via a rotary mechanism of the central stalk subunits to proton translocation. This protein is part of the stalk that links CF(0) to CF(1). It either transmits conformational changes from CF(0) to CF(1) or is implicated in proton conduction. This is ATP synthase subunit delta from Cytophaga hutchinsonii (strain ATCC 33406 / DSM 1761 / CIP 103989 / NBRC 15051 / NCIMB 9469 / D465).